We begin with the raw amino-acid sequence, 804 residues long: G-type lectin S-receptor-like serine/threonine-protein kinase At1g61500 (804 aa).

An N-terminal signal peptide occupies residues Met-1 to Ser-24. A Bulb-type lectin domain is found at Ala-25 to Phe-145. The Extracellular segment spans residues Ala-25–Thr-427. Asn-54, Asn-135, and Asn-237 each carry an N-linked (GlcNAc...) asparagine glycan. Residues Pro-279 to Glu-315 enclose the EGF-like; atypical domain. Cystine bridges form between Cys-283-Cys-295 and Cys-289-Cys-303. 3 N-linked (GlcNAc...) asparagine glycosylation sites follow: Asn-321, Asn-337, and Asn-376. The PAN domain maps to Cys-334 to Arg-416. Cystine bridges form between Cys-369–Cys-390 and Cys-373–Cys-379. The helical transmembrane segment at Ile-428 to Val-448 threads the bilayer. At Trp-449 to Arg-804 the chain is on the cytoplasmic side. Residues Phe-491–Phe-776 enclose the Protein kinase domain. ATP is bound by residues Leu-497 to Val-505 and Lys-519. Phosphoserine occurs at positions 525 and 540. Residues Arg-580 to Ile-597 are caM-binding. Asp-616 functions as the Proton acceptor in the catalytic mechanism. Phosphoserine occurs at positions 620 and 633. At Thr-650 the chain carries Phosphothreonine. Residues Ser-693 and Ser-787 each carry the phosphoserine modification.

This sequence belongs to the protein kinase superfamily. Ser/Thr protein kinase family.

The protein resides in the cell membrane. The catalysed reaction is L-seryl-[protein] + ATP = O-phospho-L-seryl-[protein] + ADP + H(+). The enzyme catalyses L-threonyl-[protein] + ATP = O-phospho-L-threonyl-[protein] + ADP + H(+). The sequence is that of G-type lectin S-receptor-like serine/threonine-protein kinase At1g61500 from Arabidopsis thaliana (Mouse-ear cress).